A 1121-amino-acid polypeptide reads, in one-letter code: Transcription factor CSR2 (1121 aa).

Serine 23, serine 46, and serine 127 each carry phosphoserine. 4 disordered regions span residues 273-342 (PLHT…RSLP), 513-532 (HTQL…PQKL), 579-600 (LKRN…GLAM), and 837-860 (IPQD…LQTS). Residues 276–310 (TQRTSPSNTARTGNAMDTSNSDRASPASNNNTTDA) are compositionally biased toward polar residues. Low complexity-rich tracts occupy residues 318–329 (NNNPMNNNNSPA), 519–529 (SRPRSSSISSP), and 582–597 (NNSN…SSSG). Residue serine 327 is modified to Phosphoserine. The span at 837-846 (IPQDKNHNEV) shows a compositional bias: basic and acidic residues. Lysine 841 is covalently cross-linked (Glycyl lysine isopeptide (Lys-Gly) (interchain with G-Cter in ubiquitin)). The span at 847–860 (NDTNGNSNTSLQTS) shows a compositional bias: polar residues. Serine 987 bears the Phosphoserine mark. Polar residues predominate over residues 999–1009 (KTTAVSDSSNG). Disordered regions lie at residues 999-1022 (KTTA…QARP) and 1075-1121 (TPRY…EISS). The segment covering 1084-1093 (TNTDYNYNDN) has biased composition (low complexity).

The protein belongs to the CSR2 family. In terms of processing, phosphorylated by CDC28.

Its subcellular location is the cytoplasm. It is found in the nucleus. Its function is as follows. Transcription factor involved in the regulation of fermentation and aerobic oxidation. Acts as a repressor of CYC1, which is involved in electron flow through the mitochondria under aerobic condition. Required for pseudohyphal formation upon nitrogen starvation. May be involved in viability at stationary phase and aging. The chain is Transcription factor CSR2 (CSR2) from Saccharomyces cerevisiae (strain ATCC 204508 / S288c) (Baker's yeast).